Here is a 144-residue protein sequence, read N- to C-terminus: Maximins 3/H2 (144 aa).

The signal sequence occupies residues 1-18 (MNFKYIVAVSFLIASAYA). 2 consecutive propeptides follow at residues 19–43 (RSVQ…REIR) and 74–123 (TAEE…KEKR). I143 bears the Isoleucine amide mark.

The protein belongs to the bombinin family. In terms of tissue distribution, expressed by the skin glands.

It localises to the secreted. Maximin-3 shows antibacterial activity against both Gram-positive and Gram-negative bacteria. It also shows antimicrobial activity against the fungus C.albicans, but not against A.flavus nor P.uticale. It has little hemolytic activity. It possess a significant cytotoxicity against tumor cell lines. It possess a significant anti-HIV activity. It shows high spermicidal activity. Functionally, maximin-H2 shows antibacterial activity against both Gram-positive and Gram-negative bacteria. It also shows antimicrobial activity against the fungus C.albicans. Shows strong hemolytic activity. The polypeptide is Maximins 3/H2 (Bombina maxima (Giant fire-bellied toad)).